The chain runs to 959 residues: Kinesin-like protein NACK1 (959 aa).

A disordered region spans residues 1–28 (MTVRTPGTPASKIDKTPATTPNGHRGRE). Positions 30 to 353 (KIVVTVRLRP…LYFATRAKEV (324 aa)) constitute a Kinesin motor domain. 117 to 124 (GQTSSGKT) is a binding site for ATP. Position 145 is a phosphothreonine (T145). Residues 362–429 (VVSDKQLVKH…LRRKLQEEQG (68 aa)) are a coiled coil. Disordered regions lie at residues 417–438 (VDELRRKLQEEQGPKPSESVSP), 451–473 (SPNLEEKAPVRSERTRNTMGRQS), 598–640 (LPSN…FLKS), and 658–700 (NRAP…SVNM). 2 stretches are compositionally biased toward basic and acidic residues: residues 418-429 (DELRRKLQEEQG) and 454-466 (LEEKAPVRSERTR). Positions 557–598 (KSVSANLKEEIARLHSQGSTIADLEEQLENVQKSLDKLVMSL) form a coiled coil. Positions 600–611 (SNNDQQSNNDTT) are enriched in low complexity. The span at 613–623 (KAKHPSKKKKL) shows a compositional bias: basic residues. Over residues 630-640 (NSINRQNFLKS) the composition is skewed to polar residues. Phosphothreonine is present on residues T675 and T690. Residues 685 to 756 (SSKEGTPYRR…EANEAAGYNL (72 aa)) are required for the binding to NPK1.

This sequence belongs to the TRAFAC class myosin-kinesin ATPase superfamily. Kinesin family. KIN-7 subfamily. In terms of assembly, interacts (via C-terminus) with NPK1 (via C-terminus). In terms of processing, phosphorylated at Thr-145, Thr-675 and Thr-690 by CDKAs and CDKBs. The phosphorylation occurs before metaphase and inhibits the interaction with NPK1 preventing the transition to cytokinesis.

The protein resides in the cytoplasm. It is found in the nucleus. It localises to the cytoskeleton. Its subcellular location is the phragmoplast. In terms of biological role, probable plus end-directed motor protein that functions in the NACK-PQR (NPK1-NQK1/MEK1-NRK1) MAP kinase signaling pathway, which is essential for somatic cell cytokinesis, especially for the cell-plate formation and its expansion. Regulates the activity and the localization of NPK1 by association through the non-catalytic region of the kinase. The sequence is that of Kinesin-like protein NACK1 (NACK1) from Nicotiana tabacum (Common tobacco).